We begin with the raw amino-acid sequence, 131 residues long: Small ribosomal subunit protein uS8 (131 aa).

It belongs to the universal ribosomal protein uS8 family. Part of the 30S ribosomal subunit. Contacts proteins S5 and S12.

Functionally, one of the primary rRNA binding proteins, it binds directly to 16S rRNA central domain where it helps coordinate assembly of the platform of the 30S subunit. The sequence is that of Small ribosomal subunit protein uS8 from Ralstonia pickettii (strain 12J).